The sequence spans 283 residues: Eukaryotic translation initiation factor 3 subunit K (283 aa).

A PCI domain is found at 52 to 263 (YDLLANLAIL…EIKATVIREE (212 aa)). Residues 114 to 135 (EATTTDADNAGSLSGDDDDDEV) are disordered.

The protein belongs to the eIF-3 subunit K family. Component of the eukaryotic translation initiation factor 3 (eIF-3) complex.

It is found in the cytoplasm. In terms of biological role, component of the eukaryotic translation initiation factor 3 (eIF-3) complex, which is involved in protein synthesis of a specialized repertoire of mRNAs and, together with other initiation factors, stimulates binding of mRNA and methionyl-tRNAi to the 40S ribosome. The eIF-3 complex specifically targets and initiates translation of a subset of mRNAs involved in cell proliferation. The sequence is that of Eukaryotic translation initiation factor 3 subunit K from Mycosarcoma maydis (Corn smut fungus).